The following is a 133-amino-acid chain: Small ribosomal subunit protein uS8 (133 aa).

Belongs to the universal ribosomal protein uS8 family. As to quaternary structure, part of the 30S ribosomal subunit. Contacts proteins S5 and S12.

One of the primary rRNA binding proteins, it binds directly to 16S rRNA central domain where it helps coordinate assembly of the platform of the 30S subunit. In Deinococcus geothermalis (strain DSM 11300 / CIP 105573 / AG-3a), this protein is Small ribosomal subunit protein uS8.